A 103-amino-acid chain; its full sequence is Cystatin-A8 (103 aa).

The disordered stretch occupies residues 1–20 (MESEEMLAGGLTEPRPATPE). A Secondary area of contact motif is present at residues 51–55 (QVVAG).

The protein belongs to the cystatin family.

The protein localises to the cytoplasm. Functionally, this is an intracellular thiol proteinase inhibitor. The chain is Cystatin-A8 from Sus scrofa (Pig).